Reading from the N-terminus, the 533-residue chain is Thromboxane-A synthase (533 aa).

The Cytoplasmic portion of the chain corresponds to 1 to 10 (MEVLGLLKFE). Residues 11–31 (VSGTVVTVTLSVVLLALLKWY) form a helical membrane-spanning segment. At 32 to 75 (STSAFSRLRKLGIRHPEPSPFVGNLMFFRQGFWESHLELRERYG) the chain is on the lumenal side. The chain crosses the membrane as a helical span at residues 76–96 (PLCGYYLGRRMYIVISDPDMI). The Cytoplasmic segment spans residues 97–223 (KEVLVENFSN…QRVFAFSTPR (127 aa)). A helical transmembrane segment spans residues 224–244 (PLLALILSFPSIMVPLARILP). Over 245–335 (NKNRDELNGF…LTVDEIAGQA (91 aa)) the chain is Lumenal. Residues 336 to 356 (FLFLIAGHEITTNTLSFITYL) form a helical membrane-spanning segment. Topologically, residues 357-533 (LATHPECQER…NGVYVKIVSR (177 aa)) are cytoplasmic. Residue C479 coordinates heme.

Belongs to the cytochrome P450 family. Monomer. It depends on heme as a cofactor. As to expression, expressed in bone marrow, spleen, lung, thymus, liver, uterus, and macrophages.

The protein localises to the endoplasmic reticulum membrane. The catalysed reaction is prostaglandin H2 = thromboxane A2. It carries out the reaction prostaglandin H2 = (12S)-hydroxy-(5Z,8E,10E)-heptadecatrienoate + malonaldehyde. It catalyses the reaction a hydroperoxyeicosatetraenoate = an oxoeicosatetraenoate + H2O. The enzyme catalyses (15S)-hydroperoxy-(5Z,8Z,11Z,13E)-eicosatetraenoate = 15-oxo-(5Z,8Z,11Z,13E)-eicosatetraenoate + H2O. The catalysed reaction is (15S)-hydroperoxy-(5Z,8Z,11Z,13E)-eicosatetraenoate + AH2 = (15S)-hydroxy-(5Z,8Z,11Z,13E)-eicosatetraenoate + A + H2O. Functionally, catalyzes the conversion of prostaglandin H2 (PGH2) to thromboxane A2 (TXA2), a potent inducer of blood vessel constriction and platelet aggregation. Also cleaves PGH2 to 12-hydroxy-heptadecatrienoicacid (12-HHT) and malondialdehyde, which is known to act as a mediator of DNA damage. 12-HHT and malondialdehyde are formed stoichiometrically in the same amounts as TXA2. Additionally, displays dehydratase activity, toward (15S)-hydroperoxy-(5Z,8Z,11Z,13E)-eicosatetraenoate (15(S)-HPETE) producing 15-KETE and 15-HETE. This is Thromboxane-A synthase (Tbxas1) from Rattus norvegicus (Rat).